A 223-amino-acid chain; its full sequence is Peptidyl-prolyl cis-trans isomerase, mitochondrial (223 aa).

A mitochondrion-targeting transit peptide spans 1–44 (MFGPRHFSVLKTTGSLVSSTFSSSLKPTATFSCARAFSQTSSIM). The region spanning 62–222 (NKPTSEIKAQ…KKPTIVDCGA (161 aa)) is the PPIase cyclophilin-type domain.

This sequence belongs to the cyclophilin-type PPIase family.

It is found in the mitochondrion. Its subcellular location is the cytoplasm. It carries out the reaction [protein]-peptidylproline (omega=180) = [protein]-peptidylproline (omega=0). With respect to regulation, binds cyclosporin A (CsA). CsA mediates some of its effects via an inhibitory action on PPIase. In terms of biological role, PPIases accelerate the folding of proteins. It catalyzes the cis-trans isomerization of proline imidic peptide bonds in oligopeptides. This Neurospora crassa (strain ATCC 24698 / 74-OR23-1A / CBS 708.71 / DSM 1257 / FGSC 987) protein is Peptidyl-prolyl cis-trans isomerase, mitochondrial (csr-1).